Reading from the N-terminus, the 113-residue chain is Large ribosomal subunit protein eL31 (113 aa).

This sequence belongs to the eukaryotic ribosomal protein eL31 family. Component of the large ribosomal subunit (LSU). Mature yeast ribosomes consist of a small (40S) and a large (60S) subunit. The 40S small subunit contains 1 molecule of ribosomal RNA (18S rRNA) and at least 33 different proteins. The large 60S subunit contains 3 rRNA molecules (25S, 5.8S and 5S rRNA) and at least 46 different proteins.

Its subcellular location is the cytoplasm. In terms of biological role, component of the ribosome, a large ribonucleoprotein complex responsible for the synthesis of proteins in the cell. The small ribosomal subunit (SSU) binds messenger RNAs (mRNAs) and translates the encoded message by selecting cognate aminoacyl-transfer RNA (tRNA) molecules. The large subunit (LSU) contains the ribosomal catalytic site termed the peptidyl transferase center (PTC), which catalyzes the formation of peptide bonds, thereby polymerizing the amino acids delivered by tRNAs into a polypeptide chain. The nascent polypeptides leave the ribosome through a tunnel in the LSU and interact with protein factors that function in enzymatic processing, targeting, and the membrane insertion of nascent chains at the exit of the ribosomal tunnel. The chain is Large ribosomal subunit protein eL31 (rpl31) from Schizosaccharomyces pombe (strain 972 / ATCC 24843) (Fission yeast).